Here is a 2324-residue protein sequence, read N- to C-terminus: Serine/threonine-protein kinase MEC1 (2324 aa).

Residues 1349–1901 form the FAT domain; the sequence is VLAQKSLETN…LWYITVLLNS (553 aa). One can recognise a PI3K/PI4K catalytic domain in the interval 2005 to 2308; it reads FTPHYKVYSS…QVDTVVQQAS (304 aa). A G-loop region spans residues 2011–2017; the sequence is VYSSLKK. The tract at residues 2177–2185 is catalytic loop; it reads GLGDRHLEN. The segment at 2197–2221 is activation loop; it reads HVDFDCLFEKGKTLPVPEIVPFRLT. An FATC domain is found at 2292–2324; it reads LPLSVPGQVDTVVQQASSDENLAQMYIGWLPFW.

It belongs to the PI3/PI4-kinase family. ATM subfamily.

It localises to the nucleus. It catalyses the reaction L-seryl-[protein] + ATP = O-phospho-L-seryl-[protein] + ADP + H(+). The catalysed reaction is L-threonyl-[protein] + ATP = O-phospho-L-threonyl-[protein] + ADP + H(+). In terms of biological role, serine/threonine protein kinase which activates checkpoint signaling upon genotoxic stresses such as ionizing radiation (IR), ultraviolet light (UV), or DNA replication stalling, thereby acting as a DNA damage sensor. Recognizes the substrate consensus sequence [ST]-Q. Recruited to DNA lesions in order to initiate the DNA repair by homologous recombination. Phosphorylates histone H2A to form H2AS128ph (gamma-H2A) at sites of DNA damage, also involved in the regulation of DNA damage response mechanism. Required for cell growth and meiotic recombination. This is Serine/threonine-protein kinase MEC1 (MEC1) from Eremothecium gossypii (strain ATCC 10895 / CBS 109.51 / FGSC 9923 / NRRL Y-1056) (Yeast).